Reading from the N-terminus, the 643-residue chain is Macrolide export ATP-binding/permease protein MacB (643 aa).

One can recognise an ABC transporter domain in the interval 6–244 (IELKGVSRVF…QVRSPFGVRH (239 aa)). An ATP-binding site is contributed by 42 to 49 (GASGSGKS). The next 4 membrane-spanning stretches (helical) occupy residues 270-290 (VLTL…LAIG), 518-538 (LTIL…IGVM), 569-589 (FLIE…VIGL), and 606-626 (LMPI…FGYL).

Belongs to the ABC transporter superfamily. Macrolide exporter (TC 3.A.1.122) family. As to quaternary structure, homodimer.

The protein resides in the cell inner membrane. In terms of biological role, non-canonical ABC transporter that contains transmembrane domains (TMD), which form a pore in the inner membrane, and an ATP-binding domain (NBD), which is responsible for energy generation. Confers resistance against macrolides. In Wolinella succinogenes (strain ATCC 29543 / DSM 1740 / CCUG 13145 / JCM 31913 / LMG 7466 / NCTC 11488 / FDC 602W) (Vibrio succinogenes), this protein is Macrolide export ATP-binding/permease protein MacB.